We begin with the raw amino-acid sequence, 412 residues long: Histone-lysine N-methyltransferase SUV39H1 (412 aa).

An interaction with SIRT1 region spans residues M1–F89. The Chromo domain occupies F43 to H101. The region spanning V179–G240 is the Pre-SET domain. Zn(2+) is bound by residues C181, C183, C186, C194, C195, C222, C226, C228, and C232. One can recognise an SET domain in the interval Y243–N366. Residue R254–W256 coordinates S-adenosyl-L-methionine. The interval G255 to T377 is mediates interaction with MECOM. N6-acetyllysine is present on K266. S-adenosyl-L-methionine contacts are provided by residues Y297 and N323–H324. Residue C326 participates in Zn(2+) binding. At S391 the chain carries Phosphoserine. The 17-residue stretch at V396–F412 folds into the Post-SET domain. The Zn(2+) site is built by C400, C402, and C407.

It belongs to the class V-like SAM-binding methyltransferase superfamily. Histone-lysine methyltransferase family. Suvar3-9 subfamily. In terms of assembly, interacts with H3 and H4 histones. Interacts with GFI1B, DNMT3B, CBX1, CBX4, CCAR2, MBD1, RUNX1, RUNX3, MYOD1, SMAD5 and RB1. Interacts with SBF1 through the SET domain. Interacts with HDAC1 and HDAC2 through the N-terminus and associates with the core histone deacetylase complex composed of HDAC1, HDAC2, RBBP4 and RBBP7. Component of the eNoSC complex, composed of SIRT1, SUV39H1 and RRP8. Interacts (via SET domain) with MECOM; enhances MECOM transcriptional repression activity. Interacts with LMNA; the interaction increases stability of SUV39H1. The large PER complex involved in the histone methylation is composed of at least PER2, CBX3, TRIM28, SUV39H1 and/or SUV39H2; CBX3 mediates the formation of the complex. (Microbial infection) Interacts with HTLV-1 Tax protein, leading to abrogate Tax transactivation of HTLV-1 LTR. Phosphorylated on serine residues, and to a lesser degree, on threonine residues. The phosphorylated form is stabilized by SBF1 and is less active in its transcriptional repressor function. Post-translationally, ubiquitinated by the DCX(DCAF13) E3 ubiquitin ligase complex, leading to its degradation. In terms of processing, acetylated at Lys-266, leading to inhibition of enzyme activity. SIRT1-mediated deacetylation relieves this inhibition. (Microbial infection) A higher molecular weight form is also seen in M.bovis infected cells.

The protein localises to the nucleus. It localises to the nucleus lamina. The protein resides in the nucleoplasm. It is found in the chromosome. Its subcellular location is the centromere. The protein localises to the cytoplasmic vesicle. It localises to the phagosome lumen. The protein resides in the cell membrane. It carries out the reaction L-lysyl(9)-[histone H3] + 3 S-adenosyl-L-methionine = N(6),N(6),N(6)-trimethyl-L-lysyl(9)-[histone H3] + 3 S-adenosyl-L-homocysteine + 3 H(+). Its activity is regulated as follows. Inhibited by S-adenosyl-L-homocysteine. Negatively regulated by CCAR2. Functionally, histone methyltransferase that specifically trimethylates 'Lys-9' of histone H3 using monomethylated H3 'Lys-9' as substrate. Also weakly methylates histone H1 (in vitro). H3 'Lys-9' trimethylation represents a specific tag for epigenetic transcriptional repression by recruiting HP1 (CBX1, CBX3 and/or CBX5) proteins to methylated histones. Mainly functions in heterochromatin regions, thereby playing a central role in the establishment of constitutive heterochromatin at pericentric and telomere regions. H3 'Lys-9' trimethylation is also required to direct DNA methylation at pericentric repeats. SUV39H1 is targeted to histone H3 via its interaction with RB1 and is involved in many processes, such as repression of MYOD1-stimulated differentiation, regulation of the control switch for exiting the cell cycle and entering differentiation, repression by the PML-RARA fusion protein, BMP-induced repression, repression of switch recombination to IgA and regulation of telomere length. Component of the eNoSC (energy-dependent nucleolar silencing) complex, a complex that mediates silencing of rDNA in response to intracellular energy status and acts by recruiting histone-modifying enzymes. The eNoSC complex is able to sense the energy status of cell: upon glucose starvation, elevation of NAD(+)/NADP(+) ratio activates SIRT1, leading to histone H3 deacetylation followed by dimethylation of H3 at 'Lys-9' (H3K9me2) by SUV39H1 and the formation of silent chromatin in the rDNA locus. Recruited by the large PER complex to the E-box elements of the circadian target genes such as PER2 itself or PER1, contributes to the conversion of local chromatin to a heterochromatin-like repressive state through H3 'Lys-9' trimethylation. Its function is as follows. (Microbial infection) Plays a role in defense against mycobacterial infections. Methylates M.tuberculosis HupB on 'Lys-140', probably methylates HupB of M.bovis also. Methylation has an inhibitory effect on mycobacterial growth in the host. Macrophages expressing about 60% SUV39H1 are slightly more susceptible to M.bovis or M.tuberculosis infection. Chaetocin (an inhibitor of this enzyme) increases macrophage survival of M.tuberculosis. This protein inhibits biofilm formation by M.tuberculosis via 'Lys-140' trimethylation. This chain is Histone-lysine N-methyltransferase SUV39H1 (SUV39H1), found in Homo sapiens (Human).